We begin with the raw amino-acid sequence, 374 residues long: Eukaryotic translation initiation factor 3 subunit M (374 aa).

Residue S2 is modified to N-acetylserine. Phosphoserine is present on residues S2 and S152. The PCI domain maps to 180 to 339; that stretch reads AASKVMVELL…RKVVVSHSTH (160 aa). Position 254 is an N6-acetyllysine (K254). Residue S367 is modified to Phosphoserine.

Belongs to the eIF-3 subunit M family. In terms of assembly, component of the eukaryotic translation initiation factor 3 (eIF-3) complex, which is composed of 13 subunits: EIF3A, EIF3B, EIF3C, EIF3D, EIF3E, EIF3F, EIF3G, EIF3H, EIF3I, EIF3J, EIF3K, EIF3L and EIF3M. The eIF-3 complex appears to include 3 stable modules: module A is composed of EIF3A, EIF3B, EIF3G and EIF3I; module B is composed of EIF3F, EIF3H, and EIF3M; and module C is composed of EIF3C, EIF3D, EIF3E, EIF3K and EIF3L. EIF3C of module C binds EIF3B of module A and EIF3H of module B, thereby linking the three modules. EIF3J is a labile subunit that binds to the eIF-3 complex via EIF3B. The eIF-3 complex interacts with RPS6KB1 under conditions of nutrient depletion. Mitogenic stimulation leads to binding and activation of a complex composed of MTOR and RPTOR, leading to phosphorylation and release of RPS6KB1 and binding of EIF4B to eIF-3.

It is found in the cytoplasm. In terms of biological role, component of the eukaryotic translation initiation factor 3 (eIF-3) complex, which is required for several steps in the initiation of protein synthesis. The eIF-3 complex associates with the 40S ribosome and facilitates the recruitment of eIF-1, eIF-1A, eIF-2:GTP:methionyl-tRNAi and eIF-5 to form the 43S pre-initiation complex (43S PIC). The eIF-3 complex stimulates mRNA recruitment to the 43S PIC and scanning of the mRNA for AUG recognition. The eIF-3 complex is also required for disassembly and recycling of post-termination ribosomal complexes and subsequently prevents premature joining of the 40S and 60S ribosomal subunits prior to initiation. The eIF-3 complex specifically targets and initiates translation of a subset of mRNAs involved in cell proliferation, including cell cycling, differentiation and apoptosis, and uses different modes of RNA stem-loop binding to exert either translational activation or repression. The chain is Eukaryotic translation initiation factor 3 subunit M (Eif3m) from Mus musculus (Mouse).